The primary structure comprises 239 residues: Derlin-2 (239 aa).

Over M1 to R56 the chain is Cytoplasmic. The chain crosses the membrane as a helical span at residues L57 to F77. At L78–V98 the chain is on the lumenal side. The helical transmembrane segment at F99–F119 threads the bilayer. Residues L120–Q150 lie on the Cytoplasmic side of the membrane. A helical transmembrane segment spans residues A151–V171. Residue D172 is a topological domain, lumenal. Residues L173–P193 traverse the membrane as a helical segment. Topologically, residues G194–G239 are cytoplasmic. A disordered region spans residues D215–G239. Residues F229–G239 show a composition bias toward gly residues.

Belongs to the derlin family. In terms of assembly, forms homo- and heterooligomers with DERL3 and, to a lesser extent, with DERL1. Interacts with the SEL1L/SYVN1 and VCP/SELENOS protein complexes. Mediates association between VCP and EDEM1, as well as that between VCP and the misfolded glycoproteins. Interacts with OS9. Interacts with SELENOK and SELENOS. Interacts with the signal recognition particle/SRP and the SRP receptor; in the process of endoplasmic reticulum stress-induced pre-emptive quality control. Interacts with CCDC47.

It is found in the endoplasmic reticulum membrane. Its function is as follows. Functional component of endoplasmic reticulum-associated degradation (ERAD) for misfolded lumenal glycoproteins, but not that of misfolded nonglycoproteins. May act by forming a channel that allows the retrotranslocation of misfolded glycoproteins into the cytosol where they are ubiquitinated and degraded by the proteasome. May mediate the interaction between VCP and misfolded glycoproteins. May also be involved in endoplasmic reticulum stress-induced pre-emptive quality control, a mechanism that selectively attenuates the translocation of newly synthesized proteins into the endoplasmic reticulum and reroutes them to the cytosol for proteasomal degradation. The sequence is that of Derlin-2 from Pongo abelii (Sumatran orangutan).